A 430-amino-acid chain; its full sequence is Trigger factor (430 aa).

The 86-residue stretch at 165 to 250 folds into the PPIase FKBP-type domain; that stretch reads TDIAIFDFEG…LHQIKTKKIP (86 aa).

Belongs to the FKBP-type PPIase family. Tig subfamily.

The protein localises to the cytoplasm. It carries out the reaction [protein]-peptidylproline (omega=180) = [protein]-peptidylproline (omega=0). In terms of biological role, involved in protein export. Acts as a chaperone by maintaining the newly synthesized protein in an open conformation. Functions as a peptidyl-prolyl cis-trans isomerase. This Onion yellows phytoplasma (strain OY-M) protein is Trigger factor.